A 259-amino-acid chain; its full sequence is Large ribosomal subunit protein uL3m (259 aa).

Residues 1-15 (MQSRFLISPTLIRTF) constitute a mitochondrion transit peptide. Residues 176 to 197 (ASHGASLSHRTPGSTGQNTTPS) are compositionally biased toward polar residues. Residues 176–208 (ASHGASLSHRTPGSTGQNTTPSRVLPGRKMAGH) are disordered.

The protein belongs to the universal ribosomal protein uL3 family. As to quaternary structure, component of the mitochondrial large ribosomal subunit (mt-LSU). Mature yeast 74S mitochondrial ribosomes consist of a small (37S) and a large (54S) subunit. The 37S small subunit contains a 15S ribosomal RNA (15S mt-rRNA) and at least 32 different proteins. The 54S large subunit contains a 21S rRNA (21S mt-rRNA) and at least 45 different proteins.

It is found in the cytoplasm. The protein resides in the mitochondrion. Its function is as follows. Component of the mitochondrial ribosome (mitoribosome), a dedicated translation machinery responsible for the synthesis of mitochondrial genome-encoded proteins, including at least some of the essential transmembrane subunits of the mitochondrial respiratory chain. The mitoribosomes are attached to the mitochondrial inner membrane and translation products are cotranslationally integrated into the membrane. This Schizosaccharomyces pombe (strain 972 / ATCC 24843) (Fission yeast) protein is Large ribosomal subunit protein uL3m (mrpl9).